A 673-amino-acid polypeptide reads, in one-letter code: FLYWCH-type zinc finger-containing protein 1 (673 aa).

Positions Met-1–Thr-62 are disordered. Ser-21 is modified (phosphoserine). Over residues Val-47 to Thr-62 the composition is skewed to polar residues. 2 FLYWCH-type zinc fingers span residues Phe-92–His-150 and Phe-235–His-293. Residue Lys-110 forms a Glycyl lysine isopeptide (Lys-Gly) (interchain with G-Cter in SUMO2) linkage. A compositionally biased stretch (basic and acidic residues) spans Asp-147–Asp-158. The segment at Asp-147–Val-178 is disordered. Residues Ser-294 and Ser-339 each carry the phosphoserine modification. The tract at residues Leu-351 to Phe-402 is disordered. Over residues Ser-354–Lys-379 the composition is skewed to basic residues. 3 FLYWCH-type zinc fingers span residues Phe-402–His-460, Phe-490–His-548, and Phe-581–His-639. Residues Leu-646 to His-673 form a disordered region. A compositionally biased stretch (basic residues) spans Ala-659–His-673. A Glycyl lysine isopeptide (Lys-Gly) (interchain with G-Cter in SUMO2) cross-link involves residue Lys-666.

As to quaternary structure, interacts with CTNNB1 (when unphosphorylated), perhaps preventing interaction of CTNNB1 with TCF4, and thereby regulating transcription activation; phosphorylation of CTNNB1 may inhibit the interaction.

The protein localises to the nucleus. It localises to the chromosome. It is found in the centromere. Its function is as follows. Transcription cofactor. Negatively regulates transcription activation by catenin beta-1 CTNNB1, perhaps acting by competing with TCF4 for CTNNB1 binding. May play a role in DNA-damage response signaling. Binds specifically to DNA sequences at peri-centromeric chromatin loci. The protein is FLYWCH-type zinc finger-containing protein 1 (Flywch1) of Mus musculus (Mouse).